Consider the following 663-residue polypeptide: Methionine--tRNA ligase (663 aa).

Positions 10–20 (AYTNGPLHLGH) match the 'HIGH' region motif. Zn(2+) is bound by residues C142, C145, C154, and C157. The short motif at 323–327 (KMSTS) is the 'KMSKS' region element. ATP is bound at residue T326. One can recognise a tRNA-binding domain in the interval 563-663 (YFGNIDLRVG…RDLPVGSKIH (101 aa)).

It belongs to the class-I aminoacyl-tRNA synthetase family. MetG type 1 subfamily. Homodimer. Zn(2+) serves as cofactor.

It is found in the cytoplasm. It carries out the reaction tRNA(Met) + L-methionine + ATP = L-methionyl-tRNA(Met) + AMP + diphosphate. Functionally, is required not only for elongation of protein synthesis but also for the initiation of all mRNA translation through initiator tRNA(fMet) aminoacylation. In Methanococcus maripaludis (strain C5 / ATCC BAA-1333), this protein is Methionine--tRNA ligase.